We begin with the raw amino-acid sequence, 129 residues long: MQKVFNMHDLVKFSPETLKYNEAGLVPCIAQDVESGEILMMAWMNAESVAKTLETGRVTYWSRSRQSFWIKGESSGHVQELVELRVDCDRDALLAMVRQTGPACHTNRRSCFYTAIRDGEEHEIMTPIS.

Aspartate 87 serves as a coordination point for Mg(2+). Residue cysteine 88 coordinates Zn(2+). Positions 89 and 91 each coordinate Mg(2+). 2 residues coordinate Zn(2+): cysteine 104 and cysteine 111.

Belongs to the PRA-CH family. As to quaternary structure, homodimer. Mg(2+) serves as cofactor. It depends on Zn(2+) as a cofactor.

The protein localises to the cytoplasm. It carries out the reaction 1-(5-phospho-beta-D-ribosyl)-5'-AMP + H2O = 1-(5-phospho-beta-D-ribosyl)-5-[(5-phospho-beta-D-ribosylamino)methylideneamino]imidazole-4-carboxamide. It participates in amino-acid biosynthesis; L-histidine biosynthesis; L-histidine from 5-phospho-alpha-D-ribose 1-diphosphate: step 3/9. Functionally, catalyzes the hydrolysis of the adenine ring of phosphoribosyl-AMP. In Ruegeria sp. (strain TM1040) (Silicibacter sp.), this protein is Phosphoribosyl-AMP cyclohydrolase.